The following is a 309-amino-acid chain: Ribosomal RNA small subunit methyltransferase H (309 aa).

Residues 33–35 (GGH), Asp53, Phe79, Asp100, and Gln107 each bind S-adenosyl-L-methionine.

This sequence belongs to the methyltransferase superfamily. RsmH family.

Its subcellular location is the cytoplasm. The catalysed reaction is cytidine(1402) in 16S rRNA + S-adenosyl-L-methionine = N(4)-methylcytidine(1402) in 16S rRNA + S-adenosyl-L-homocysteine + H(+). Functionally, specifically methylates the N4 position of cytidine in position 1402 (C1402) of 16S rRNA. The polypeptide is Ribosomal RNA small subunit methyltransferase H (Clostridium botulinum (strain Okra / Type B1)).